The sequence spans 2212 residues: Nonribosomal peptide synthetase ftmPS (2212 aa).

Positions 74–473 (TYAELDSLSD…IEHHLQQTLP (400 aa)) are adenylation 1. Residues 592–669 (PPSTLKETTI…EQSQRAGLIQ (78 aa)) form the Carrier 1 domain. S629 is subject to O-(pantetheine 4'-phosphoryl)serine. A condensation 1 region spans residues 708-973 (EDIYPCTALQ…IATVPLRIRV (266 aa)). The tract at residues 1167–1564 (TYRELWAHSS…LSAVEASLMR (398 aa)) is adenylation 2. The 80-residue stretch at 1678 to 1757 (PMSDDNERRL…QFRHLITEDD (80 aa)) folds into the Carrier 2 domain. At S1715 the chain carries O-(pantetheine 4'-phosphoryl)serine. The interval 1815–2070 (HFQFDLSGAI…CTNYIPYRLS (256 aa)) is condensation 2.

The protein belongs to the NRP synthetase family.

The enzyme catalyses L-proline + L-tryptophan + 2 ATP = brevianamide F + 2 AMP + 2 diphosphate + 2 H(+). Its pathway is mycotoxin biosynthesis. Its function is as follows. Nonribosomal peptide synthetase; part of the gene cluster that mediates the biosynthesis of fumitremorgins, indole alkaloids that carry not only intriguing chemical structures, but also interesting biological and pharmacological activities. The biosynthesis of fumitremorgin-type alkaloids begins by condensation of the two amino acids L-tryptophan and L-proline to brevianamide F, catalyzed by the non-ribosomal peptide synthetase ftmPS/ftmA. Brevianamide F is then prenylated by the prenyltransferase ftmPT1/ftmB in the presence of dimethylallyl diphosphate, resulting in the formation of tryprostatin B. The three cytochrome P450 monooxygenases, ftmP450-1/ftmC, ftmP450-2/ftmE and ftmP450-3/FtmG, are responsible for the conversion of tryprostatin B to 6-hydroxytryprostatin B, tryprostatin A to fumitremorgin C and fumitremorgin C to 12,13-dihydroxyfumitremorgin C, respectively. The putative methyltransferase ftmMT/ftmD is expected for the conversion of 6-hydroxytryprostatin B to tryprostatin A. FtmPT2/FtmH catalyzes the prenylation of 12,13-dihydroxyfumitre-morgin C in the presence of dimethylallyl diphosphate, resulting in the formation of fumitremorgin B. Fumitremorgin B is further converted to verruculogen by ftmOx1/ftmF via the insertion of an endoperoxide bond between the two prenyl moieties. Finally, verruculogen is further converted to fumitremorgin A by the verruculogen prenyltransferase ftmPT3. This Neosartorya fischeri (strain ATCC 1020 / DSM 3700 / CBS 544.65 / FGSC A1164 / JCM 1740 / NRRL 181 / WB 181) (Aspergillus fischerianus) protein is Nonribosomal peptide synthetase ftmPS (ftmPS).